A 72-amino-acid polypeptide reads, in one-letter code: Protein CYSTEINE-RICH TRANSMEMBRANE MODULE 1 (72 aa).

The segment covering 1–11 (MSQYDHNQSAG) has biased composition (polar residues). The tract at residues 1–46 (MSQYDHNQSAGANPPPPMSTCTSPPPPIGYPTNQPSHGSVAQGKVE) is disordered. A compositionally biased stretch (pro residues) spans 13 to 29 (NPPPPMSTCTSPPPPIG). Residues 49-65 (SKGDGFFKGCLAAMCCC) form a helical membrane-spanning segment.

This sequence belongs to the CYSTM1 family. As to quaternary structure, heterodimers. Binds weakly to CYSTM7 and WIH1/CYSTM13. In terms of tissue distribution, mostly expressed in roots, flowers and siliques and, to a lower extent, in stems and leaves.

The protein localises to the cell membrane. Its subcellular location is the nucleus. In terms of biological role, may be involved in aluminium (Al) tolerance. Involved in resistance to abiotic stress. The polypeptide is Protein CYSTEINE-RICH TRANSMEMBRANE MODULE 1 (Arabidopsis thaliana (Mouse-ear cress)).